A 30-amino-acid polypeptide reads, in one-letter code: Photosystem I reaction center subunit XII (30 aa).

A helical transmembrane segment spans residues 7-26; it reads IFVALLFALVSAVLAIRLGT.

It belongs to the PsaM family.

The protein resides in the plastid. The protein localises to the chloroplast thylakoid membrane. The protein is Photosystem I reaction center subunit XII of Gracilaria tenuistipitata var. liui (Red alga).